Reading from the N-terminus, the 338-residue chain is DNA-directed RNA polymerase subunit alpha (338 aa).

The segment at 1 to 234 is alpha N-terminal domain (alpha-NTD); that stretch reads MIERNWNELI…DQLQIFITFE (234 aa). Residues 250–338 are alpha C-terminal domain (alpha-CTD); the sequence is FNPALLKKVD…DLAKKFEDQI (89 aa).

This sequence belongs to the RNA polymerase alpha chain family. As to quaternary structure, homodimer. The RNAP catalytic core consists of 2 alpha, 1 beta, 1 beta' and 1 omega subunit. When a sigma factor is associated with the core the holoenzyme is formed, which can initiate transcription.

The catalysed reaction is RNA(n) + a ribonucleoside 5'-triphosphate = RNA(n+1) + diphosphate. DNA-dependent RNA polymerase catalyzes the transcription of DNA into RNA using the four ribonucleoside triphosphates as substrates. The sequence is that of DNA-directed RNA polymerase subunit alpha from Caulobacter sp. (strain K31).